The chain runs to 148 residues: Large ribosomal subunit protein uL15 (148 aa).

The disordered stretch occupies residues 1-51 (MNLSSLKPAEGAVKSRKRIGRGPGSGLGGTSTRGHKGAKSRSGYSKKIGFE). Gly residues predominate over residues 21 to 31 (RGPGSGLGGTS).

Belongs to the universal ribosomal protein uL15 family. As to quaternary structure, part of the 50S ribosomal subunit.

Functionally, binds to the 23S rRNA. The protein is Large ribosomal subunit protein uL15 of Porphyromonas gingivalis (strain ATCC BAA-308 / W83).